The following is a 294-amino-acid chain: Flavin-dependent thymidylate synthase (294 aa).

Positions 27-250 (GFIRVIDYMG…PFVYEAFEEY (224 aa)) constitute a ThyX domain. FAD-binding positions include T73, 96-98 (RHR), and E104. DUMP-binding positions include 93-96 (QWIR), 104-108 (EYSAR), and R189. The ThyX motif signature appears at 96–106 (RHRTASVNEYS). FAD contacts are provided by residues 205 to 207 (NLH) and H211. R216 is a binding site for dUMP. Catalysis depends on R216, which acts as the Involved in ionization of N3 of dUMP, leading to its activation.

It belongs to the thymidylate synthase ThyX family. As to quaternary structure, homotetramer. Requires FAD as cofactor.

It catalyses the reaction dUMP + (6R)-5,10-methylene-5,6,7,8-tetrahydrofolate + NADPH + H(+) = dTMP + (6S)-5,6,7,8-tetrahydrofolate + NADP(+). Its pathway is pyrimidine metabolism; dTTP biosynthesis. Its function is as follows. Catalyzes the reductive methylation of 2'-deoxyuridine-5'-monophosphate (dUMP) to 2'-deoxythymidine-5'-monophosphate (dTMP) while utilizing 5,10-methylenetetrahydrofolate (mTHF) as the methyl donor, and NADPH and FADH(2) as the reductant. The protein is Flavin-dependent thymidylate synthase of Rickettsia conorii (strain ATCC VR-613 / Malish 7).